A 387-amino-acid chain; its full sequence is 17-beta-hydroxysteroid dehydrogenase type 2 (387 aa).

The helical; Signal-anchor for type II membrane protein transmembrane segment at 4-24 (FFSDTAWICLAVPTVLCGTVF) threads the bilayer. 82-111 (QKAVLVTGGDCGLGHALCKYLDELGFTVFA) provides a ligand contact to NAD(+). Residue S219 coordinates substrate. Y232 is a catalytic residue.

The protein belongs to the short-chain dehydrogenases/reductases (SDR) family. In terms of assembly, homodimer. Expressed in placenta.

It is found in the endoplasmic reticulum membrane. The catalysed reaction is 17beta-estradiol + NAD(+) = estrone + NADH + H(+). It carries out the reaction testosterone + NAD(+) = androst-4-ene-3,17-dione + NADH + H(+). The enzyme catalyses 17beta-hydroxy-5alpha-androstan-3-one + NAD(+) = 5alpha-androstan-3,17-dione + NADH + H(+). It catalyses the reaction (20S)-hydroxypregn-4-en-3-one + NAD(+) = progesterone + NADH + H(+). Its function is as follows. Catalyzes the NAD-dependent oxidation of the highly active 17beta-hydroxysteroids, such as estradiol (E2), testosterone (T), and dihydrotestosterone (DHT), to their less active forms and thus regulates the biological potency of these steroids. Oxidizes estradiol to estrone, testosterone to androstenedione, and dihydrotestosterone to 5alpha-androstan-3,17-dione. Also has 20-alpha-HSD activity. In Homo sapiens (Human), this protein is 17-beta-hydroxysteroid dehydrogenase type 2.